A 303-amino-acid polypeptide reads, in one-letter code: Ornithine carbamoyltransferase (303 aa).

Residues 52 to 55 (STRT), glutamine 79, arginine 103, and 130 to 133 (HPCQ) contribute to the carbamoyl phosphate site. L-ornithine-binding positions include asparagine 161, aspartate 222, and 226-227 (SM). Carbamoyl phosphate is bound by residues 262–263 (CL) and lysine 290.

Belongs to the aspartate/ornithine carbamoyltransferase superfamily. OTCase family.

Its subcellular location is the cytoplasm. It catalyses the reaction carbamoyl phosphate + L-ornithine = L-citrulline + phosphate + H(+). The protein operates within amino-acid biosynthesis; L-arginine biosynthesis; L-arginine from L-ornithine and carbamoyl phosphate: step 1/3. Functionally, reversibly catalyzes the transfer of the carbamoyl group from carbamoyl phosphate (CP) to the N(epsilon) atom of ornithine (ORN) to produce L-citrulline. The protein is Ornithine carbamoyltransferase of Desulfotalea psychrophila (strain LSv54 / DSM 12343).